The sequence spans 160 residues: Transcription antitermination protein NusB (160 aa).

The protein belongs to the NusB family.

In terms of biological role, involved in transcription antitermination. Required for transcription of ribosomal RNA (rRNA) genes. Binds specifically to the boxA antiterminator sequence of the ribosomal RNA (rrn) operons. This Mycolicibacterium smegmatis (strain ATCC 700084 / mc(2)155) (Mycobacterium smegmatis) protein is Transcription antitermination protein NusB.